The following is a 74-amino-acid chain: Exodeoxyribonuclease 7 small subunit (74 aa).

It belongs to the XseB family. In terms of assembly, heterooligomer composed of large and small subunits.

It localises to the cytoplasm. The enzyme catalyses Exonucleolytic cleavage in either 5'- to 3'- or 3'- to 5'-direction to yield nucleoside 5'-phosphates.. In terms of biological role, bidirectionally degrades single-stranded DNA into large acid-insoluble oligonucleotides, which are then degraded further into small acid-soluble oligonucleotides. In Thermotoga neapolitana (strain ATCC 49049 / DSM 4359 / NBRC 107923 / NS-E), this protein is Exodeoxyribonuclease 7 small subunit.